A 760-amino-acid chain; its full sequence is Xaa-Pro dipeptidyl-peptidase (760 aa).

Residues serine 349, aspartate 469, and histidine 499 each act as charge relay system in the active site.

This sequence belongs to the peptidase S15 family. Homodimer.

It localises to the cytoplasm. The enzyme catalyses Hydrolyzes Xaa-Pro-|- bonds to release unblocked, N-terminal dipeptides from substrates including Ala-Pro-|-p-nitroanilide and (sequentially) Tyr-Pro-|-Phe-Pro-|-Gly-Pro-|-Ile.. Its function is as follows. Removes N-terminal dipeptides sequentially from polypeptides having unsubstituted N-termini provided that the penultimate residue is proline. This is Xaa-Pro dipeptidyl-peptidase from Streptococcus pyogenes serotype M1.